A 969-amino-acid chain; its full sequence is Dual serine/threonine and tyrosine protein kinase (969 aa).

A coiled-coil region spans residues 7–37 (QEFRRYLRNRNQLQHVLEETQQALELINLEN). The Protein kinase domain maps to 632–894 (PHCAEEIGRG…PLLGAIVPVL (263 aa)). ATP contacts are provided by residues 638–646 (IGRGQYGIV) and lysine 662. The active-site Proton acceptor is the aspartate 760. A disordered region spans residues 904 to 945 (SKSLQEVSSDKLQESSTDSRNPALALAEPYNQRGTVVSPPPT).

The protein belongs to the protein kinase superfamily. Ser/Thr protein kinase family.

It is found in the cytoplasm. It catalyses the reaction L-seryl-[protein] + ATP = O-phospho-L-seryl-[protein] + ADP + H(+). The catalysed reaction is L-threonyl-[protein] + ATP = O-phospho-L-threonyl-[protein] + ADP + H(+). It carries out the reaction L-tyrosyl-[protein] + ATP = O-phospho-L-tyrosyl-[protein] + ADP + H(+). In Apis mellifera (Honeybee), this protein is Dual serine/threonine and tyrosine protein kinase.